The primary structure comprises 104 residues: Protein U9 (104 aa).

The chain crosses the membrane as a helical span at residues 37 to 54; the sequence is GVQGLNADCSYVKSQCIK.

It localises to the host membrane. The sequence is that of Protein U9 (U9) from Human herpesvirus 6B (HHV-6 variant B).